Consider the following 241-residue polypeptide: DNA repair protein RecO (241 aa).

It belongs to the RecO family.

Its function is as follows. Involved in DNA repair and RecF pathway recombination. The polypeptide is DNA repair protein RecO (Xanthomonas campestris pv. campestris (strain B100)).